The following is a 421-amino-acid chain: Glucose-1-phosphate adenylyltransferase (421 aa).

Alpha-D-glucose 1-phosphate contacts are provided by residues Y109, G175, E190 to K191, and S208.

It belongs to the bacterial/plant glucose-1-phosphate adenylyltransferase family. As to quaternary structure, homotetramer.

The catalysed reaction is alpha-D-glucose 1-phosphate + ATP + H(+) = ADP-alpha-D-glucose + diphosphate. Its pathway is glycan biosynthesis; glycogen biosynthesis. In terms of biological role, involved in the biosynthesis of ADP-glucose, a building block required for the elongation reactions to produce glycogen. Catalyzes the reaction between ATP and alpha-D-glucose 1-phosphate (G1P) to produce pyrophosphate and ADP-Glc. The sequence is that of Glucose-1-phosphate adenylyltransferase from Teredinibacter turnerae (strain ATCC 39867 / T7901).